A 432-amino-acid chain; its full sequence is Acyl-coenzyme A thioesterase 3 (432 aa).

Residues serine 243, aspartate 337, and histidine 371 each act as charge relay system in the active site. The Microbody targeting signal motif lies at 430–432 (AKL).

The protein belongs to the C/M/P thioester hydrolase family. Widely expressed. Highly expressed in the kidney, expressed at low level in the liver. Isoform 2 is expressed in the kidney, but not in the liver. Isoform 1 is liver-specific. Highly expressed in kidney (at protein level).

It localises to the peroxisome. The catalysed reaction is hexadecanoyl-CoA + H2O = hexadecanoate + CoA + H(+). It catalyses the reaction decanoyl-CoA + H2O = decanoate + CoA + H(+). It carries out the reaction dodecanoyl-CoA + H2O = dodecanoate + CoA + H(+). The enzyme catalyses tetradecanoyl-CoA + H2O = tetradecanoate + CoA + H(+). The catalysed reaction is octadecanoyl-CoA + H2O = octadecanoate + CoA + H(+). It catalyses the reaction eicosanoyl-CoA + H2O = eicosanoate + CoA + H(+). It carries out the reaction (9Z)-octadecenoyl-CoA + H2O = (9Z)-octadecenoate + CoA + H(+). The enzyme catalyses (9Z,12Z)-octadecadienoyl-CoA + H2O = (9Z,12Z)-octadecadienoate + CoA + H(+). The catalysed reaction is (5Z,8Z,11Z,14Z)-eicosatetraenoyl-CoA + H2O = (5Z,8Z,11Z,14Z)-eicosatetraenoate + CoA + H(+). It catalyses the reaction tetracosanoyl-CoA + H2O = tetracosanoate + CoA + H(+). It carries out the reaction hexacosanoyl-CoA + H2O = hexacosanoate + CoA + H(+). The enzyme catalyses docosanoyl-CoA + H2O = docosanoate + CoA + H(+). The catalysed reaction is (9Z)-hexadecenoyl-CoA + H2O = (9Z)-hexadecenoate + CoA + H(+). Its pathway is lipid metabolism; fatty acid metabolism. Catalyzes the hydrolysis of acyl-CoAs into free fatty acids and coenzyme A (CoASH), regulating their respective intracellular levels. Mainly active on long-chain acyl-CoAs. May have a function in termination of beta-oxidation of fatty acids. The polypeptide is Acyl-coenzyme A thioesterase 3 (Acot3) (Mus musculus (Mouse)).